Reading from the N-terminus, the 1603-residue chain is Vitellogenin-3 (1603 aa).

The N-terminal stretch at 1-15 (MKSIIIASLVALAIA) is a signal peptide. Residues 24 to 685 (FSPKSEYVYK…EKNAFLPKEV (662 aa)) enclose the Vitellogenin domain. The N-linked (GlcNAc...) asparagine glycan is linked to Asn-1266. The VWFD domain occupies 1306–1475 (ATCKVGQSEV…SYLLKNEECE (170 aa)). 2 cysteine pairs are disulfide-bonded: Cys-1308–Cys-1438 and Cys-1330–Cys-1474.

In terms of tissue distribution, expressed in the intestine of adult hermaphrodites.

Its subcellular location is the secreted. Its function is as follows. Precursor of the egg-yolk proteins that are sources of nutrients during embryonic development. Together with other vitellogenins, may play a role in modulating life-span, acting via induction of autophagy and lysosomal lipolysis. The protein is Vitellogenin-3 (vit-3) of Caenorhabditis elegans.